The sequence spans 115 residues: NADH-ubiquinone oxidoreductase chain 3 (115 aa).

A run of 3 helical transmembrane segments spans residues 4–24 (LLTMLTNITLSTLLISIAFWL), 55–75 (FFLVAITFLLFDLEIALLLPI), and 84–104 (INTMTLTAFILVSILALGLAY).

Belongs to the complex I subunit 3 family. As to quaternary structure, core subunit of respiratory chain NADH dehydrogenase (Complex I) which is composed of 45 different subunits. Interacts with TMEM186. Interacts with TMEM242.

The protein localises to the mitochondrion inner membrane. The enzyme catalyses a ubiquinone + NADH + 5 H(+)(in) = a ubiquinol + NAD(+) + 4 H(+)(out). In terms of biological role, core subunit of the mitochondrial membrane respiratory chain NADH dehydrogenase (Complex I) which catalyzes electron transfer from NADH through the respiratory chain, using ubiquinone as an electron acceptor. Essential for the catalytic activity of complex I. The chain is NADH-ubiquinone oxidoreductase chain 3 from Neotoma lepida (Desert woodrat).